We begin with the raw amino-acid sequence, 347 residues long: Quinolinate synthase (347 aa).

2 residues coordinate iminosuccinate: His47 and Ser68. [4Fe-4S] cluster is bound at residue Cys113. Residues 139–141 and Ser156 contribute to the iminosuccinate site; that span reads YAN. Position 200 (Cys200) interacts with [4Fe-4S] cluster. Iminosuccinate is bound by residues 226 to 228 and Thr243; that span reads HPE. A [4Fe-4S] cluster-binding site is contributed by Cys297.

It belongs to the quinolinate synthase family. Type 1 subfamily. [4Fe-4S] cluster is required as a cofactor.

The protein localises to the cytoplasm. The catalysed reaction is iminosuccinate + dihydroxyacetone phosphate = quinolinate + phosphate + 2 H2O + H(+). It participates in cofactor biosynthesis; NAD(+) biosynthesis; quinolinate from iminoaspartate: step 1/1. Its function is as follows. Catalyzes the condensation of iminoaspartate with dihydroxyacetone phosphate to form quinolinate. This is Quinolinate synthase from Escherichia coli O9:H4 (strain HS).